We begin with the raw amino-acid sequence, 155 residues long: MADLSSLKDLGTATEAAAPAHVRKVDSLGRSYATGKRKNAVARVWVKPGSGKIIVNGKEFAEYFARPVLQMILRQPIVAAARDGQFDIVATVAGGGLSGQAGAVRHGLSKALTYFEPGLRSVLKKGGFLTRDSRVVERKKYGKAKARRSFQFSKR.

It belongs to the universal ribosomal protein uS9 family.

The polypeptide is Small ribosomal subunit protein uS9 (Rhizobium leguminosarum bv. trifolii (strain WSM2304)).